A 330-amino-acid chain; its full sequence is Polygalacturonase inhibitor 1 (330 aa).

Residues 1–21 (MDKTATLCLLFLFTFLTTCLS) form the signal peptide. Disulfide bonds link Cys-25-Cys-55 and Cys-56-Cys-63. LRR repeat units follow at residues 69–93 (NHRV…VGDL), 94–117 (PYLE…TIAK), 118–142 (LKNL…ISQL), 143–166 (KNLE…LSTL), 167–189 (PKIL…SFGS), 191–215 (PGTV…LGNI), 217–237 (FNRI…LFGS), 238–260 (NKTT…KVDI), 261–285 (PKTL…WTEA), and 287–309 (LQFF…KLQT). 2 N-linked (GlcNAc...) asparagine glycosylation sites follow: Asn-106 and Asn-130. An N-linked (GlcNAc...) asparagine glycan is attached at Asn-238. Asn-291 carries N-linked (GlcNAc...) asparagine glycosylation. 2 cysteine pairs are disulfide-bonded: Cys-298–Cys-320 and Cys-322–Cys-329.

The protein belongs to the polygalacturonase-inhibiting protein family.

The protein localises to the secreted. The protein resides in the cell wall. Its subcellular location is the membrane. Its function is as follows. Inhibitor of fungal polygalacturonase. It is an important factor for plant resistance to phytopathogenic fungi. The polypeptide is Polygalacturonase inhibitor 1 (PGIP1) (Arabidopsis thaliana (Mouse-ear cress)).